The primary structure comprises 532 residues: MVADNIDAGVAIAVADQSSSPVGDKVELPAGNYILVGVDIDTTGRRLMDEIVQLAAYTPTDHFEQYIMPYMNLNPAARQRHQVRVISIGFYRMLKSMQTYKIIKSKSEIAALKDFLNWLEQLKTKAGPSSDGIVLIYHEERKFIPYMILESLKKYGLLERFTASVKSFANSINLAKASIGDANIKNYSLRKLSKILSTTKEEDAACSASTSGSGSGLGSGSSMVSDSVSISPRDSTVTNGDDKQSSKNAVQGKRELFDGNASVRAKLAFDVALQLSNSDGKPEPKSSEALENMFNAIRPFAKLVVSDVLELDIQIENLERQNSFRPVFLNYFKTTLYHRVRAVKFRIVLAENGFDLNTLSAIWAEKNIEGLDIALQSIGRLKSKDKAELLELLDSYFDPKKTTVKPVVKGNSNNNNNYRRRNRRGGRQSVKDARPSSSPSASTEFGAGGDKSRSVSSLPDSTTKTPSPNKPRMHRKRNSRQSLGATPNGLKVAAEISSSGVSELNNSAPPAVTISPVVAQPSPTPVAITASN.

2 disordered regions span residues 206–251 (CSAS…NAVQ) and 403–491 (TVKP…NGLK). 2 stretches are compositionally biased toward low complexity: residues 220–231 (GSSMVSDSVSIS) and 404–417 (VKPV…NNNN). The segment covering 454–467 (SVSSLPDSTTKTPS) has biased composition (polar residues). Ser-467 carries the post-translational modification Phosphoserine.

Component of the osk RNP complex, which is composed of at least exuperantia (exu), ypsilon schachtel (yps), aret (bruno), cup, and the mRNA of osk. In the sponge body, forms a ribonucleoprotein complex (RNP) containing at least me31B, exu, yps and the mRNA of osk; interactions with exu and yps are RNA dependent.

It is found in the cytoplasm. It localises to the cytoplasmic ribonucleoprotein granule. Its function is as follows. Ensures the proper localization of the mRNA of the bicoid gene to the anterior regions of the oocyte thus playing a fundamental role in the establishment of the polarity of the oocyte. May bind the bcd mRNA. The sequence is that of Maternal protein exuperantia (exu) from Drosophila melanogaster (Fruit fly).